We begin with the raw amino-acid sequence, 258 residues long: Acyl-[acyl-carrier-protein]--UDP-N-acetylglucosamine O-acyltransferase (258 aa).

It belongs to the transferase hexapeptide repeat family. LpxA subfamily. Homotrimer.

The protein localises to the cytoplasm. It catalyses the reaction a (3R)-hydroxyacyl-[ACP] + UDP-N-acetyl-alpha-D-glucosamine = a UDP-3-O-[(3R)-3-hydroxyacyl]-N-acetyl-alpha-D-glucosamine + holo-[ACP]. The protein operates within glycolipid biosynthesis; lipid IV(A) biosynthesis; lipid IV(A) from (3R)-3-hydroxytetradecanoyl-[acyl-carrier-protein] and UDP-N-acetyl-alpha-D-glucosamine: step 1/6. Involved in the biosynthesis of lipid A, a phosphorylated glycolipid that anchors the lipopolysaccharide to the outer membrane of the cell. The polypeptide is Acyl-[acyl-carrier-protein]--UDP-N-acetylglucosamine O-acyltransferase (Pseudomonas putida (strain W619)).